We begin with the raw amino-acid sequence, 172 residues long: Nicotinamide-nucleotide adenylyltransferase (172 aa).

This sequence belongs to the archaeal NMN adenylyltransferase family.

The protein localises to the cytoplasm. The catalysed reaction is beta-nicotinamide D-ribonucleotide + ATP + H(+) = diphosphate + NAD(+). It functions in the pathway cofactor biosynthesis; NAD(+) biosynthesis; NAD(+) from nicotinamide D-ribonucleotide: step 1/1. This chain is Nicotinamide-nucleotide adenylyltransferase, found in Methanococcus aeolicus (strain ATCC BAA-1280 / DSM 17508 / OCM 812 / Nankai-3).